The sequence spans 197 residues: Xanthine phosphoribosyltransferase (197 aa).

The xanthine site is built by Leu20 and Asn27. Ala128–Ala132 is a 5-phospho-alpha-D-ribose 1-diphosphate binding site. Residue Lys156 coordinates xanthine.

Belongs to the purine/pyrimidine phosphoribosyltransferase family. Xpt subfamily. In terms of assembly, homodimer.

It is found in the cytoplasm. It catalyses the reaction XMP + diphosphate = xanthine + 5-phospho-alpha-D-ribose 1-diphosphate. It functions in the pathway purine metabolism; XMP biosynthesis via salvage pathway; XMP from xanthine: step 1/1. Converts the preformed base xanthine, a product of nucleic acid breakdown, to xanthosine 5'-monophosphate (XMP), so it can be reused for RNA or DNA synthesis. This Bacillus cereus (strain G9842) protein is Xanthine phosphoribosyltransferase.